The following is a 293-amino-acid chain: Diaminopimelate epimerase (293 aa).

Residues asparagine 17, glutamine 49, and asparagine 69 each coordinate substrate. The active-site Proton donor is the cysteine 78. Substrate-binding positions include 79–80, asparagine 169, asparagine 203, and 221–222; these read GN and ER. Cysteine 230 functions as the Proton acceptor in the catalytic mechanism. 231–232 contributes to the substrate binding site; that stretch reads GS.

Belongs to the diaminopimelate epimerase family. Homodimer.

The protein localises to the cytoplasm. The enzyme catalyses (2S,6S)-2,6-diaminopimelate = meso-2,6-diaminopimelate. Its pathway is amino-acid biosynthesis; L-lysine biosynthesis via DAP pathway; DL-2,6-diaminopimelate from LL-2,6-diaminopimelate: step 1/1. Catalyzes the stereoinversion of LL-2,6-diaminopimelate (L,L-DAP) to meso-diaminopimelate (meso-DAP), a precursor of L-lysine and an essential component of the bacterial peptidoglycan. In Methylobacterium sp. (strain 4-46), this protein is Diaminopimelate epimerase.